Reading from the N-terminus, the 92-residue chain is RIIa domain-containing protein 1 (92 aa).

In terms of domain architecture, RIIa spans 43–77 (KEVEWLISGFFREIFLKRPDNILEFAADYFTDPRL).

The chain is RIIa domain-containing protein 1 (RIIAD1) from Homo sapiens (Human).